Reading from the N-terminus, the 83-residue chain is Cytochrome b559 subunit alpha (83 aa).

Residues 21–35 form a helical membrane-spanning segment; that stretch reads VIHSITIPSLFIAGW. His23 lines the heme pocket.

The protein belongs to the PsbE/PsbF family. In terms of assembly, heterodimer of an alpha subunit and a beta subunit. PSII is composed of 1 copy each of membrane proteins PsbA, PsbB, PsbC, PsbD, PsbE, PsbF, PsbH, PsbI, PsbJ, PsbK, PsbL, PsbM, PsbT, PsbX, PsbY, PsbZ, Psb30/Ycf12, at least 3 peripheral proteins of the oxygen-evolving complex and a large number of cofactors. It forms dimeric complexes. The cofactor is heme b.

The protein resides in the plastid. It localises to the chloroplast thylakoid membrane. Functionally, this b-type cytochrome is tightly associated with the reaction center of photosystem II (PSII). PSII is a light-driven water:plastoquinone oxidoreductase that uses light energy to abstract electrons from H(2)O, generating O(2) and a proton gradient subsequently used for ATP formation. It consists of a core antenna complex that captures photons, and an electron transfer chain that converts photonic excitation into a charge separation. This chain is Cytochrome b559 subunit alpha, found in Citrus sinensis (Sweet orange).